We begin with the raw amino-acid sequence, 203 residues long: Peptide deformylase (203 aa).

Fe cation is bound by residues C130 and H173. Residue E174 is part of the active site. A Fe cation-binding site is contributed by H177.

This sequence belongs to the polypeptide deformylase family. Fe(2+) is required as a cofactor.

It carries out the reaction N-terminal N-formyl-L-methionyl-[peptide] + H2O = N-terminal L-methionyl-[peptide] + formate. In terms of biological role, removes the formyl group from the N-terminal Met of newly synthesized proteins. Requires at least a dipeptide for an efficient rate of reaction. N-terminal L-methionine is a prerequisite for activity but the enzyme has broad specificity at other positions. The chain is Peptide deformylase from Streptococcus pneumoniae serotype 2 (strain D39 / NCTC 7466).